Here is a 1074-residue protein sequence, read N- to C-terminus: Calcium-transporting ATPase 8, plasma membrane-type (1074 aa).

Residues 1–33 (MTSLLKSSPGRRRGGDVESGKSEHADSDSDTFY) form a disordered region. Residues 1-180 (MTSLLKSSPG…NTYPRKKGKG (180 aa)) lie on the Cytoplasmic side of the membrane. Residues 13–27 (RGGDVESGKSEHADS) show a composition bias toward basic and acidic residues. An interaction with calmodulin region spans residues 43-54 (RLQQWRKAALVL). Residues 181–201 (FLRFLWDACHDLTLIILMVAA) form a helical membrane-spanning segment. The Extracellular portion of the chain corresponds to 202–219 (VASLALGIKTEGIKEGWY). Residues 220–240 (DGGSIAFAVILVIVVTAVSDY) traverse the membrane as a helical segment. The Cytoplasmic portion of the chain corresponds to 241–369 (KQSLQFQNLN…GEETPLQVRL (129 aa)). The chain crosses the membrane as a helical span at residues 370–389 (NGVATFIGSIGLAVAAAVLV). The Extracellular portion of the chain corresponds to 390–426 (ILLTRYFTGHTKDNNGGPQFVKGKTKVGHVIDDVVKV). The helical transmembrane segment at 427–444 (LTVAVTIVVVAVPEGLPL) threads the bilayer. Over 445–840 (AVTLTLAYSM…RWGRSVYANI (396 aa)) the chain is Cytoplasmic. The 4-aspartylphosphate intermediate role is filled by Asp-482. Mg(2+) is bound by residues Asp-785 and Asp-789. Residues 841–859 (QKFIQFQLTVNVAALVINV) form a helical membrane-spanning segment. At 860–870 (VAAISSGDVPL) the chain is on the extracellular side. A helical membrane pass occupies residues 871–891 (TAVQLLWVNLIMDTLGALALA). Residues 892 to 911 (TEPPTDHLMGRPPVGRKEPL) are Cytoplasmic-facing. A helical membrane pass occupies residues 912–934 (ITNIMWRNLLIQAIYQVSVLLTL). Residues 935-949 (NFRGISILGLEHEVH) lie on the Extracellular side of the membrane. The chain crosses the membrane as a helical span at residues 950 to 971 (EHATRVKNTIIFNAFVLCQAFN). The Cytoplasmic segment spans residues 972–989 (EFNARKPDEKNIFKGVIK). The chain crosses the membrane as a helical span at residues 990 to 1011 (NRLFMGIIVITLVLQVIIVEFL). At 1012 to 1021 (GKFASTTKLN) the chain is on the extracellular side. The chain crosses the membrane as a helical span at residues 1022–1043 (WKQWLICVGIGVISWPLALVGK). Over 1044–1074 (FIPVPAAPISNKLKVLKFWGKKKNSSGEGSL) the chain is Cytoplasmic.

It belongs to the cation transport ATPase (P-type) (TC 3.A.3) family. Type IIB subfamily.

The protein localises to the cell membrane. It catalyses the reaction Ca(2+)(in) + ATP + H2O = Ca(2+)(out) + ADP + phosphate + H(+). Activated by calmodulin. Functionally, this magnesium-dependent enzyme catalyzes the hydrolysis of ATP coupled with the translocation of calcium from the cytosol out of the cell. This chain is Calcium-transporting ATPase 8, plasma membrane-type (ACA8), found in Arabidopsis thaliana (Mouse-ear cress).